The following is a 269-amino-acid chain: Hydroxyethylthiazole kinase (269 aa).

Met48 contacts substrate. Positions 124 and 170 each coordinate ATP. Gly197 contributes to the substrate binding site.

This sequence belongs to the Thz kinase family. Mg(2+) serves as cofactor.

It catalyses the reaction 5-(2-hydroxyethyl)-4-methylthiazole + ATP = 4-methyl-5-(2-phosphooxyethyl)-thiazole + ADP + H(+). Its pathway is cofactor biosynthesis; thiamine diphosphate biosynthesis; 4-methyl-5-(2-phosphoethyl)-thiazole from 5-(2-hydroxyethyl)-4-methylthiazole: step 1/1. In terms of biological role, catalyzes the phosphorylation of the hydroxyl group of 4-methyl-5-beta-hydroxyethylthiazole (THZ). This chain is Hydroxyethylthiazole kinase, found in Clostridium kluyveri (strain NBRC 12016).